Reading from the N-terminus, the 446-residue chain is MNAQEANFDGLVGPTHNYAGLSFGNVASLNNEKSAANPKAAAKQGLRKMKQLADLGFAQGVLPPQERPSLRLLRELGFSGKDADVIAKAAKQAPELLAAASSASAMWTANAATVSPSADTSDGRVHFTPANLCSKLHRAIEHEATRRTLSTLFADPTHFAVHEALTGTPALGDEGAANHTRFCAEYGKPGIEFFVYGRAEYRRGPEPKRFPARQTFEASRAVAHRHGLAEEATVYAQQDPDVIDAGVFHNDVISVGNRDTLFTHERAFVNKQAIYDTLTAALDARGARLNVIEVPDAAVSVNDAVTSYLFNSQLLSRADGSQVLVVPQECRENANVAAYLDRLAAGNGPIHDVLVFDLRESMKNGGGPACLRLRVVLNDAERAAVTSNVWINDTLFASLDAWIDRHYRDRLAPEDLADPALLDESRTALDELTQILRVGSLYDFQR.

Substrate is bound by residues 19–28 (AGLSFGNVAS), Asn-110, and 137–138 (HR). Glu-174 is an active-site residue. Arg-213 is a substrate binding site. His-249 is a catalytic residue. Substrate-binding residues include Asp-251 and Asn-364. Cys-370 functions as the Nucleophile in the catalytic mechanism.

This sequence belongs to the succinylarginine dihydrolase family. As to quaternary structure, homodimer.

It carries out the reaction N(2)-succinyl-L-arginine + 2 H2O + 2 H(+) = N(2)-succinyl-L-ornithine + 2 NH4(+) + CO2. It functions in the pathway amino-acid degradation; L-arginine degradation via AST pathway; L-glutamate and succinate from L-arginine: step 2/5. Functionally, catalyzes the hydrolysis of N(2)-succinylarginine into N(2)-succinylornithine, ammonia and CO(2). The chain is N-succinylarginine dihydrolase from Burkholderia orbicola (strain MC0-3).